A 196-amino-acid chain; its full sequence is Imidazoleglycerol-phosphate dehydratase (196 aa).

Belongs to the imidazoleglycerol-phosphate dehydratase family.

The protein localises to the cytoplasm. It catalyses the reaction D-erythro-1-(imidazol-4-yl)glycerol 3-phosphate = 3-(imidazol-4-yl)-2-oxopropyl phosphate + H2O. It participates in amino-acid biosynthesis; L-histidine biosynthesis; L-histidine from 5-phospho-alpha-D-ribose 1-diphosphate: step 6/9. The protein is Imidazoleglycerol-phosphate dehydratase of Solidesulfovibrio magneticus (strain ATCC 700980 / DSM 13731 / RS-1) (Desulfovibrio magneticus).